Consider the following 352-residue polypeptide: Phenylalanine--tRNA ligase alpha subunit (352 aa).

Position 258 (Glu-258) interacts with Mg(2+).

The protein belongs to the class-II aminoacyl-tRNA synthetase family. Phe-tRNA synthetase alpha subunit type 1 subfamily. Tetramer of two alpha and two beta subunits. It depends on Mg(2+) as a cofactor.

Its subcellular location is the cytoplasm. The catalysed reaction is tRNA(Phe) + L-phenylalanine + ATP = L-phenylalanyl-tRNA(Phe) + AMP + diphosphate + H(+). The polypeptide is Phenylalanine--tRNA ligase alpha subunit (Staphylococcus haemolyticus (strain JCSC1435)).